The chain runs to 467 residues: Asparagine--tRNA ligase (467 aa).

The protein belongs to the class-II aminoacyl-tRNA synthetase family. Homodimer.

The protein resides in the cytoplasm. The enzyme catalyses tRNA(Asn) + L-asparagine + ATP = L-asparaginyl-tRNA(Asn) + AMP + diphosphate + H(+). In Haemophilus influenzae (strain ATCC 51907 / DSM 11121 / KW20 / Rd), this protein is Asparagine--tRNA ligase.